The primary structure comprises 570 residues: Proline--tRNA ligase (570 aa).

The protein belongs to the class-II aminoacyl-tRNA synthetase family. ProS type 1 subfamily. As to quaternary structure, homodimer.

The protein resides in the cytoplasm. The enzyme catalyses tRNA(Pro) + L-proline + ATP = L-prolyl-tRNA(Pro) + AMP + diphosphate. Functionally, catalyzes the attachment of proline to tRNA(Pro) in a two-step reaction: proline is first activated by ATP to form Pro-AMP and then transferred to the acceptor end of tRNA(Pro). As ProRS can inadvertently accommodate and process non-cognate amino acids such as alanine and cysteine, to avoid such errors it has two additional distinct editing activities against alanine. One activity is designated as 'pretransfer' editing and involves the tRNA(Pro)-independent hydrolysis of activated Ala-AMP. The other activity is designated 'posttransfer' editing and involves deacylation of mischarged Ala-tRNA(Pro). The misacylated Cys-tRNA(Pro) is not edited by ProRS. This Clostridium acetobutylicum (strain ATCC 824 / DSM 792 / JCM 1419 / IAM 19013 / LMG 5710 / NBRC 13948 / NRRL B-527 / VKM B-1787 / 2291 / W) protein is Proline--tRNA ligase.